The following is a 1181-amino-acid chain: 1-phosphatidylinositol 4,5-bisphosphate phosphodiesterase beta-2 (1181 aa).

The PI-PLC X-box domain maps to 312 to 463 (QDMTQPLNHY…LRGKILIKNK (152 aa)). Residue histidine 327 is part of the active site. Ca(2+)-binding residues include asparagine 328, glutamate 357, and aspartate 359. The active site involves histidine 374. Ca(2+) is bound at residue glutamate 408. The tract at residues 465–534 (NQFSGPASPS…EEIKKMQSDE (70 aa)) is disordered. Residues 503–525 (TEVEEEEVVEEEEEEESGNLDEE) are compositionally biased toward acidic residues. The PI-PLC Y-box domain maps to 547 to 663 (MSSLVNYIQP…GYLLKHEFMR (117 aa)). The C2 domain maps to 666–791 (DKQFNPFSVD…CLRSESNMAL (126 aa)). The interval 847–890 (SGTPVASQSNGAPVSAGNGSTAPGTKATGEEATKEVTEPQTASL) is disordered. The segment covering 850–869 (PVASQSNGAPVSAGNGSTAP) has biased composition (polar residues). A compositionally biased stretch (basic and acidic residues) spans 874–883 (TGEEATKEVT). Positions 893 to 940 (LRELKGVVKLQRRHEKELRELERRGARRWEELLQRGAAQLAELQTQAA) form a coiled coil. At serine 950 the chain carries Phosphoserine. Coiled coils occupy residues 974–1026 (PRVQ…AELK) and 1075–1141 (HIQE…VRAY). A disordered region spans residues 1149-1181 (EAEDKPERSCEASEESCPQEPLVSKADTQESRL). Positions 1150–1159 (AEDKPERSCE) are enriched in basic and acidic residues.

As to quaternary structure, interacts with RAC1. Forms a complex composed of at least WDR26, a G-beta:gamma unit, and PLCB2. It depends on Ca(2+) as a cofactor.

It catalyses the reaction a 1,2-diacyl-sn-glycero-3-phospho-(1D-myo-inositol-4,5-bisphosphate) + H2O = 1D-myo-inositol 1,4,5-trisphosphate + a 1,2-diacyl-sn-glycerol + H(+). The enzyme catalyses a 1,2-diacyl-sn-glycero-3-phospho-(1D-myo-inositol) + H2O = 1D-myo-inositol 1-phosphate + a 1,2-diacyl-sn-glycerol + H(+). The production of the second messenger molecules diacylglycerol (DAG) and inositol 1,4,5-trisphosphate (IP3) is mediated by activated phosphatidylinositol-specific phospholipase C enzymes. In neutrophils, participates in a phospholipase C-activating N-formyl peptide-activated GPCR (G protein-coupled receptor) signaling pathway by promoting RASGRP4 activation by DAG, to promote neutrophil functional responses. The chain is 1-phosphatidylinositol 4,5-bisphosphate phosphodiesterase beta-2 from Mus musculus (Mouse).